A 192-amino-acid polypeptide reads, in one-letter code: MNHNQMNMHVPMNQVAGAPNVAMQMPVPGPIMQQQSPQQMQPAPVPQQTQQDKMDNISKVKSLMGSLRESIPMTLKSAAQILHQNHNADSNTQKGMDNPVPRFEKNLEEFFSICDQMELHLRTATTCIQQAQSAAHYLPLSVIASRLDSGPTTQETTLSYPQYLKTVGLQISYAKDIHDTLVAAAQNISPPE.

Residues 32 to 51 (MQQQSPQQMQPAPVPQQTQQ) form a disordered region.

It belongs to the Mediator complex subunit 29 family. In terms of assembly, component of the Mediator complex.

The protein resides in the nucleus. Its function is as follows. Component of the Mediator complex, a coactivator involved in the regulated transcription of nearly all RNA polymerase II-dependent genes. Mediator functions as a bridge to convey information from gene-specific regulatory proteins to the basal RNA polymerase II transcription machinery. Mediator is recruited to promoters by direct interactions with regulatory proteins and serves as a scaffold for the assembly of a functional preinitiation complex with RNA polymerase II and the general transcription factors. This Bombyx mori (Silk moth) protein is Mediator of RNA polymerase II transcription subunit 29 (ix).